The sequence spans 616 residues: Origin recognition complex subunit 3 (616 aa).

S2 is modified (N-acetylserine).

This sequence belongs to the ORC3 family. As to quaternary structure, component of the origin recognition complex (ORC) composed of at least ORC1, ORC2, ORC3, ORC4, ORC5 and ORC6. Interacts with ORC6.

It localises to the nucleus. In terms of biological role, component of the origin recognition complex (ORC) that binds origins of replication. It has a role in both chromosomal replication and mating type transcriptional silencing. Binds to the ARS consensus sequence (ACS) of origins of replication. The sequence is that of Origin recognition complex subunit 3 (ORC3) from Saccharomyces cerevisiae (strain ATCC 204508 / S288c) (Baker's yeast).